A 147-amino-acid chain; its full sequence is Bis(5'-nucleosyl)-tetraphosphatase [asymmetrical] (147 aa).

Alanine 2 carries the N-acetylalanine modification. The Nudix hydrolase domain occupies 2–139 (ALRACGLIIF…EMKATLQEGH (138 aa)). The Nudix box signature appears at 43–64 (GHVDPGENDLETALRETQEETG).

It belongs to the Nudix hydrolase family. The cofactor is a divalent metal cation.

It catalyses the reaction P(1),P(4)-bis(5'-guanosyl) tetraphosphate + H2O = GMP + GTP + 2 H(+). The catalysed reaction is a 5'-end CoA-ribonucleoside in mRNA + H2O = a 5'-end phospho-adenosine-phospho-ribonucleoside in mRNA + (R)-4'-phosphopantetheine + 2 H(+). The enzyme catalyses a 5'-end FAD-phospho-ribonucleoside in mRNA + H2O = a 5'-end phospho-adenosine-phospho-ribonucleoside in mRNA + FMN + 2 H(+). Functionally, catalyzes the asymmetric hydrolysis of diadenosine 5',5'''-P1,P4-tetraphosphate (Ap4A) to yield AMP and ATP. Exhibits decapping activity towards FAD-capped RNAs and dpCoA-capped RNAs in vitro. This chain is Bis(5'-nucleosyl)-tetraphosphatase [asymmetrical] (Nudt2), found in Rattus norvegicus (Rat).